The chain runs to 281 residues: Phosphonates import ATP-binding protein PhnC (281 aa).

Residues 2-245 (FELKDVTRRF…AVKEIYGTDK (244 aa)) form the ABC transporter domain. Residue 34–41 (GRSGAGKS) participates in ATP binding.

It belongs to the ABC transporter superfamily. Phosphonates importer (TC 3.A.1.9.1) family. The complex is composed of two ATP-binding proteins (PhnC), two transmembrane proteins (PhnE) and a solute-binding protein (PhnD).

The protein localises to the cell inner membrane. The enzyme catalyses phosphonate(out) + ATP + H2O = phosphonate(in) + ADP + phosphate + H(+). Functionally, part of the ABC transporter complex PhnCDE involved in phosphonates import. Responsible for energy coupling to the transport system. The polypeptide is Phosphonates import ATP-binding protein PhnC (Rhizobium etli (strain ATCC 51251 / DSM 11541 / JCM 21823 / NBRC 15573 / CFN 42)).